Reading from the N-terminus, the 140-residue chain is Dehydratase ustZ (140 aa).

Residues 18–113 (PGISTEDYRN…GPDHEKFADT (96 aa)) form the EthD domain.

The protein belongs to the tpcK family.

It catalyses the reaction naphtopyrone YWA1 = norrubrofusarin + H2O + H(+). Its pathway is secondary metabolite biosynthesis. Functionally, dehydratase; part of the gene cluster that mediates the biosynthesis of ustilaginoidins, dimeric gamma-naphthopyrones isolated from different fungal species. The first step in the biosynthesis of ustilaginoidins is the production of gamma-naphthopyrone precursor YWA1 by the non-reducing polyketide synthase ustP, via condensation of one acetyl-CoA starter unit with 6 malonyl-CoA units. YWA1 is then probably substrate of the ustZ to yield norrubrofusarin via a dehydration reaction. A key enzyme in the biosynthetic pathway is the laccase ustL, which catalyzes the oxidative dimerization of norrubrofusarin to ustilaginoidin A. It can produce the M- and P-atropisomers in varying amounts, depending on the reaction conditions. For the biosynthesis of 3-methylustilaginoid in derivatives such as chaetochromin A, a methylated derivative of YWA1 is required. The C-methylation is considered to be catalyzed by ustM, the phosphopantetheine attachment site of which indicates that it acts on the growing polyketide chain before release of the product. For the biosynthesis of chaetochromin A, it is assumed that saturation of the D2 double bond takes place before dimerization, and is probably catalyzed by an external reductase because no candidate gene was identified within the cluster. In Ustilaginoidea virens (Rice false smut fungus), this protein is Dehydratase ustZ.